Reading from the N-terminus, the 531-residue chain is Peroxinectin A (531 aa).

The first 21 residues, M1 to S21, serve as a signal peptide directing secretion. N62 carries N-linked (GlcNAc...) asparagine glycosylation. H101 serves as the catalytic Proton acceptor. 2 N-linked (GlcNAc...) asparagine glycosylation sites follow: N131 and N338.

It belongs to the peroxidase family.

It is found in the secreted. The enzyme catalyses 2 a phenolic donor + H2O2 = 2 a phenolic radical donor + 2 H2O. This Dictyostelium discoideum (Social amoeba) protein is Peroxinectin A (poxA).